We begin with the raw amino-acid sequence, 264 residues long: Shikimate dehydrogenase (NADP(+)) (264 aa).

Shikimate is bound by residues 14-16 (SVS) and T61. Catalysis depends on K65, which acts as the Proton acceptor. N85 and D99 together coordinate shikimate. NADP(+) contacts are provided by residues 122–126 (GAGGA), 145–150 (NRTVSR), and A208. Y210 serves as a coordination point for shikimate. An NADP(+)-binding site is contributed by G231.

It belongs to the shikimate dehydrogenase family. Homodimer.

It catalyses the reaction shikimate + NADP(+) = 3-dehydroshikimate + NADPH + H(+). Its pathway is metabolic intermediate biosynthesis; chorismate biosynthesis; chorismate from D-erythrose 4-phosphate and phosphoenolpyruvate: step 4/7. Involved in the biosynthesis of the chorismate, which leads to the biosynthesis of aromatic amino acids. Catalyzes the reversible NADPH linked reduction of 3-dehydroshikimate (DHSA) to yield shikimate (SA). The sequence is that of Shikimate dehydrogenase (NADP(+)) from Natronomonas pharaonis (strain ATCC 35678 / DSM 2160 / CIP 103997 / JCM 8858 / NBRC 14720 / NCIMB 2260 / Gabara) (Halobacterium pharaonis).